The following is a 293-amino-acid chain: Proline iminopeptidase (293 aa).

Residues 28–277 (PLVLLHGGPG…NCGHMSFVEK (250 aa)) form the AB hydrolase-1 domain. Serine 105 functions as the Nucleophile in the catalytic mechanism. The active site involves aspartate 244. Residue histidine 271 is the Proton donor of the active site.

It belongs to the peptidase S33 family.

The protein localises to the cell envelope. The enzyme catalyses Release of N-terminal proline from a peptide.. Its function is as follows. Releases the N-terminal proline from various substrates. In Lactobacillus crispatus (strain ST1), this protein is Proline iminopeptidase.